Reading from the N-terminus, the 216-residue chain is Small ribosomal subunit protein uS3c (216 aa).

A KH type-2 domain is found at 43 to 116 (IKNYVQKNMR…RLNIAITRVA (74 aa)).

It belongs to the universal ribosomal protein uS3 family. As to quaternary structure, part of the 30S ribosomal subunit.

The protein localises to the plastid. Its subcellular location is the chloroplast. This is Small ribosomal subunit protein uS3c (rps3) from Drimys granadensis.